The chain runs to 226 residues: MNESLFTPFITPTVLGLPAAVLVILFPPLLIPTSKHLINNRLIIIQQWLIRLILKQMMTTHNAKGRTWSLMLTSLIIFIASTNLLGLLPYSFTPTTQLSMNLAMAIPLWASTVAMGLRFKAKITLTHLLPQGTPTPLIPMLIIIETVSLFIQPLALAVRLTANITAGHLLMHLIGSSALAMLAINLPLTLITLTILTLLTILETAIALIQAYVFTLLVSLYLHDNS.

The next 6 helical transmembrane spans lie at 12-32 (PTVLGLPAAVLVILFPPLLIP), 68-88 (WSLMLTSLIIFIASTNLLGLL), 97-117 (QLSMNLAMAIPLWASTVAMGL), 138-158 (IPMLIIIETVSLFIQPLALAV), 182-202 (LAINLPLTLITLTILTLLTIL), and 203-223 (ETAIALIQAYVFTLLVSLYLH).

Belongs to the ATPase A chain family. In terms of assembly, component of the ATP synthase complex composed at least of ATP5F1A/subunit alpha, ATP5F1B/subunit beta, ATP5MC1/subunit c (homooctomer), MT-ATP6/subunit a, MT-ATP8/subunit 8, ATP5ME/subunit e, ATP5MF/subunit f, ATP5MG/subunit g, ATP5MK/subunit k, ATP5MJ/subunit j, ATP5F1C/subunit gamma, ATP5F1D/subunit delta, ATP5F1E/subunit epsilon, ATP5PF/subunit F6, ATP5PB/subunit b, ATP5PD/subunit d, ATP5PO/subunit OSCP. ATP synthase complex consists of a soluble F(1) head domain (subunits alpha(3) and beta(3)) - the catalytic core - and a membrane F(0) domain - the membrane proton channel (subunits c, a, 8, e, f, g, k and j). These two domains are linked by a central stalk (subunits gamma, delta, and epsilon) rotating inside the F1 region and a stationary peripheral stalk (subunits F6, b, d, and OSCP). Interacts with DNAJC30; interaction is direct.

The protein resides in the mitochondrion inner membrane. It catalyses the reaction H(+)(in) = H(+)(out). Subunit a, of the mitochondrial membrane ATP synthase complex (F(1)F(0) ATP synthase or Complex V) that produces ATP from ADP in the presence of a proton gradient across the membrane which is generated by electron transport complexes of the respiratory chain. ATP synthase complex consist of a soluble F(1) head domain - the catalytic core - and a membrane F(1) domain - the membrane proton channel. These two domains are linked by a central stalk rotating inside the F(1) region and a stationary peripheral stalk. During catalysis, ATP synthesis in the catalytic domain of F(1) is coupled via a rotary mechanism of the central stalk subunits to proton translocation. With the subunit c (ATP5MC1), forms the proton-conducting channel in the F(0) domain, that contains two crucial half-channels (inlet and outlet) that facilitate proton movement from the mitochondrial intermembrane space (IMS) into the matrix. Protons are taken up via the inlet half-channel and released through the outlet half-channel, following a Grotthuss mechanism. This chain is ATP synthase F(0) complex subunit a, found in Pongo abelii (Sumatran orangutan).